The sequence spans 292 residues: Troponin I (292 aa).

Residue Ser-1 is modified to N-acetylserine. The interval 1–149 (SSLEERRAAR…GLGGLSPEKK (149 aa)) is disordered. Low complexity predominate over residues 46 to 55 (YSAPAEPAYD). Basic and acidic residues predominate over residues 58–134 (AENRRRQQQE…EARRMAEEQK (77 aa)). Residues 237-250 (DTKGKFVKPVLRKV) form an actin-binding region. The interval 255–292 (SKLDKIQRKEAKKSDFRDNLKSSREHEADKEGGEGENE) is disordered.

This sequence belongs to the troponin I family.

Its function is as follows. Troponin I is the inhibitory subunit of troponin, the thin filament regulatory complex which confers calcium-sensitivity to striated muscle actomyosin ATPase activity. This is Troponin I from Chlamys nipponensis akazara (Akazara scallop).